The following is a 304-amino-acid chain: Ribosomal RNA small subunit methyltransferase H (304 aa).

Residues 37–39 (GGH), Asp-57, Phe-79, Asp-100, and His-107 each bind S-adenosyl-L-methionine.

The protein belongs to the methyltransferase superfamily. RsmH family.

Its subcellular location is the cytoplasm. It carries out the reaction cytidine(1402) in 16S rRNA + S-adenosyl-L-methionine = N(4)-methylcytidine(1402) in 16S rRNA + S-adenosyl-L-homocysteine + H(+). In terms of biological role, specifically methylates the N4 position of cytidine in position 1402 (C1402) of 16S rRNA. In Bacteroides fragilis (strain ATCC 25285 / DSM 2151 / CCUG 4856 / JCM 11019 / LMG 10263 / NCTC 9343 / Onslow / VPI 2553 / EN-2), this protein is Ribosomal RNA small subunit methyltransferase H.